A 161-amino-acid chain; its full sequence is MTKKMNVESFNLDHTIVDAPFVRLAGIKEGINGDVIHKYDIRFKQPNKEHMEMPALHSLEHLMAENIRNHTDKVVDISPMGCQTGFYVSLINHDNYEDVLAILEKTLNDVLAADEVPACNEVQCGWAASHSLEGAKAIAQEMLSKKDSWHVIYQPGKEPQA.

The Fe cation site is built by His-57, His-61, and Cys-124.

This sequence belongs to the LuxS family. Homodimer. Fe cation is required as a cofactor.

It catalyses the reaction S-(5-deoxy-D-ribos-5-yl)-L-homocysteine = (S)-4,5-dihydroxypentane-2,3-dione + L-homocysteine. In terms of biological role, involved in the synthesis of autoinducer 2 (AI-2) which is secreted by bacteria and is used to communicate both the cell density and the metabolic potential of the environment. The regulation of gene expression in response to changes in cell density is called quorum sensing. Catalyzes the transformation of S-ribosylhomocysteine (RHC) to homocysteine (HC) and 4,5-dihydroxy-2,3-pentadione (DPD). The protein is S-ribosylhomocysteine lyase of Macrococcus caseolyticus (strain JCSC5402) (Macrococcoides caseolyticum).